The chain runs to 307 residues: Protease HtpX homolog (307 aa).

The helical transmembrane segment at 16 to 36 (LFMGVGYLIGGAAGAMIALVV) threads the bilayer. His130 serves as a coordination point for Zn(2+). The active site involves Glu131. His134 contributes to the Zn(2+) binding site. A run of 2 helical transmembrane segments spans residues 145-165 (ITAT…FFGG) and 172-192 (GPGI…AMLV). Zn(2+) is bound at residue Glu201. Positions 278-307 (AGQSGSATPDPAPAPRGPWNGGAPRRGPWG) are disordered.

Belongs to the peptidase M48B family. The cofactor is Zn(2+).

It localises to the cell inner membrane. This Nitrobacter hamburgensis (strain DSM 10229 / NCIMB 13809 / X14) protein is Protease HtpX homolog.